A 190-amino-acid polypeptide reads, in one-letter code: Probable gluconokinase (190 aa).

Gly7–Thr14 serves as a coordination point for ATP.

Belongs to the gluconokinase GntK/GntV family.

It carries out the reaction D-gluconate + ATP = 6-phospho-D-gluconate + ADP + H(+). It participates in carbohydrate acid metabolism; D-gluconate degradation. The polypeptide is Probable gluconokinase (idnk) (Xenopus tropicalis (Western clawed frog)).